The chain runs to 183 residues: ATP synthase subunit delta (183 aa).

Belongs to the ATPase delta chain family. As to quaternary structure, F-type ATPases have 2 components, F(1) - the catalytic core - and F(0) - the membrane proton channel. F(1) has five subunits: alpha(3), beta(3), gamma(1), delta(1), epsilon(1). CF(0) has four main subunits: a(1), b(1), b'(1) and c(10-14). The alpha and beta chains form an alternating ring which encloses part of the gamma chain. F(1) is attached to F(0) by a central stalk formed by the gamma and epsilon chains, while a peripheral stalk is formed by the delta, b and b' chains.

It is found in the cellular thylakoid membrane. Functionally, f(1)F(0) ATP synthase produces ATP from ADP in the presence of a proton or sodium gradient. F-type ATPases consist of two structural domains, F(1) containing the extramembraneous catalytic core and F(0) containing the membrane proton channel, linked together by a central stalk and a peripheral stalk. During catalysis, ATP synthesis in the catalytic domain of F(1) is coupled via a rotary mechanism of the central stalk subunits to proton translocation. This protein is part of the stalk that links CF(0) to CF(1). It either transmits conformational changes from CF(0) to CF(1) or is implicated in proton conduction. This Nostoc sp. (strain PCC 7120 / SAG 25.82 / UTEX 2576) protein is ATP synthase subunit delta.